Reading from the N-terminus, the 481-residue chain is 2-methylisoborneol synthase (481 aa).

2 disordered regions span residues 1–125 and 139–160; these read MPDS…PVGP and QAAV…GPVV. Residues 11 to 23 show a composition bias toward pro residues; it reads TSLPEQPPAPPAT. A compositionally biased stretch (low complexity) spans 24–33; the sequence is APDAPAATVT. 2 stretches are compositionally biased toward pro residues: residues 52 to 64 and 71 to 104; these read VTRP…PSMP and SSPP…PPAT. Low complexity predominate over residues 105–114; it reads APETSAATGS. Mg(2+) contacts are provided by aspartate 238, aspartate 239, glutamate 243, asparagine 386, serine 390, and glutamate 394.

It belongs to the terpene synthase family. 2-methylisoborneol synthase subfamily. The cofactor is Mg(2+).

The enzyme catalyses (E)-2-methylgeranyl diphosphate + H2O = 2-methylisoborneol + diphosphate. In terms of biological role, catalyzes the cyclization of 2-methylgeranyl diphosphate (2-MeGPP) to 2-methylisoborneol (2-MIB), which likely involves the intermediacy of 2-methyllinalyl diphosphate. This Streptomyces lasalocidi (Streptomyces lasaliensis) protein is 2-methylisoborneol synthase (tpc).